Consider the following 601-residue polypeptide: Glutathione-regulated potassium-efflux system protein KefB (601 aa).

13 helical membrane-spanning segments follow: residues 4-24 (ADLL…VPLA), 29-49 (IGAV…GLGF), 55-75 (EILH…GLEL), 87-107 (IFGV…GLLM), 111-131 (FLWQ…TAMA), 152-172 (VLLF…LLAG), 177-197 (HFDW…LIGG), 207-227 (FIAA…LVLS), 230-250 (LFMD…GVLL), 262-282 (AIDP…GMSL), 284-304 (LGVL…LVVI), 324-344 (MQFA…FSTA), and 356-376 (ALLL…MKGI). Residues 400–519 (KPQVIVVGFG…AGVTQFSRET (120 aa)) enclose the RCK N-terminal domain.

Belongs to the monovalent cation:proton antiporter 2 (CPA2) transporter (TC 2.A.37) family. KefB subfamily. Interacts with the regulatory subunit KefG.

It is found in the cell inner membrane. Its function is as follows. Pore-forming subunit of a potassium efflux system that confers protection against electrophiles. Catalyzes K(+)/H(+) antiport. This chain is Glutathione-regulated potassium-efflux system protein KefB, found in Salmonella enteritidis PT4 (strain P125109).